A 131-amino-acid chain; its full sequence is Small ribosomal subunit protein uS11 (131 aa).

Belongs to the universal ribosomal protein uS11 family. Part of the 30S ribosomal subunit. Interacts with proteins S7 and S18. Binds to IF-3.

Functionally, located on the platform of the 30S subunit, it bridges several disparate RNA helices of the 16S rRNA. Forms part of the Shine-Dalgarno cleft in the 70S ribosome. The polypeptide is Small ribosomal subunit protein uS11 (Cellvibrio japonicus (strain Ueda107) (Pseudomonas fluorescens subsp. cellulosa)).